We begin with the raw amino-acid sequence, 1171 residues long: MEGPLLAASLPASAPNSTYIGNQSPRTVSGRYSFGKIHEPLEVPDLLALQTDSFDWLLGNKRWQDRVEASTNGGLAVPTTSGLEEIFEEISPIEDFSGSMSLSFRDHRFEPPKYSLDDCKERDLTYSAPLFVTAEFINGNTGEIKSQTVFMGDFPLMTDRGTFVINGTERVVVSQLVRSPGIYFERVPDKTSDRDTWTAKIIPSRGAWLEFEIDKRDTVGVRVDRKRKQSVTVLMKALGWSESQIREEFADYESMISTLEKDHTSGVEDALLDIYRKLRPGEPPTQEAARNLLDNLYFNPKRYDLAKVGRYKVNKKLGTEEPLSDSVLSVDDIVRTIKYLVKLHAGEVTMPGVKNGQPVDVRVEVDDIDHFGNRRLRSVGELIQNQVRTGLSRMERVVRERMTTQDVEAITPQTLINIRPVVASIKEFFGTSQLSQFMDQTNPLAGLTHKRRLSALGPGGLSRERAGMEVRDVHPSHYGRMCPIETPEGPNIGLIGSLSSYGRINPFGFIETPYRKIVDGVVSDEVEYLTADEEDAFVIAQANAPLDADSRFAEARVLVRAKGGETEFVPRDEVDYMDVAARQMVSVATAMIPFLEHDDANRALMGANMQRQAVPLVKSEAPLIGTGMEFRAAVDAGDVVVATKAGVATDVSADMITTSNDDGTSTTYKVAKFRRSNHGTAYNQQVVINEGDRVEVGTVLADGPSTDGGEMALGRNLMVAFMPWEGHNYEDAIILSQRLVQDDVLSSIHIEEHEVDARDTKLGPEEITRDIPNVAEEVLADLDERGIIRIGAEVRDGDLLVGKVTPKGETELTPEERLLRAIFGEKAREVRDTSLKVPHGETGTVIGVKVFDRDEGDELPPGVNQLVRVYVANKRKITDGDKLAGRHGNKGVISKILPVEDMPFLEDGTPVDVILNPLGVPSRMNVGQVLELHLGWIASRGWKIEGQPDWAKLIPEEIREAPAGSRIATPVFDGAREEEITGLLSSTIPTRDGDRLVGGDGKARLFDGRSGEPFPDPVAVGYMYILKLHHLVDDKIHARSTGPYSMITQQPLGGKAQFGGQRFGEMEVWALEAYGAAYALQELLTIKSDDVLGRVKVYEAIVKGENIPEPGIPESFKVLIKEMQSLCLNVEVLSSDGMAIEMRDSDEDVFRAAEELGIDLARREPSSVEEV.

It belongs to the RNA polymerase beta chain family. As to quaternary structure, the RNAP catalytic core consists of 2 alpha, 1 beta, 1 beta' and 1 omega subunit. When a sigma factor is associated with the core the holoenzyme is formed, which can initiate transcription.

The enzyme catalyses RNA(n) + a ribonucleoside 5'-triphosphate = RNA(n+1) + diphosphate. Its function is as follows. DNA-dependent RNA polymerase catalyzes the transcription of DNA into RNA using the four ribonucleoside triphosphates as substrates. This chain is DNA-directed RNA polymerase subunit beta, found in Kineococcus radiotolerans (strain ATCC BAA-149 / DSM 14245 / SRS30216).